We begin with the raw amino-acid sequence, 51 residues long: UPF0391 membrane protein Mbur_2216 (51 aa).

The next 2 membrane-spanning stretches (helical) occupy residues 1–21 (MADL…AYVL) and 31–51 (MTIA…TILL).

It belongs to the UPF0391 family.

It localises to the cell membrane. The protein is UPF0391 membrane protein Mbur_2216 of Methanococcoides burtonii (strain DSM 6242 / NBRC 107633 / OCM 468 / ACE-M).